Consider the following 463-residue polypeptide: Probable cysteine protease RD21B (463 aa).

The N-terminal stretch at 1-21 (MGFLKLSPMILLLAMIGVSYA) is a signal peptide. The propeptide at 22 to 137 (MDMSIISYDE…DRYQARVGDA (116 aa)) is activation peptide. Residue N92 is glycosylated (N-linked (GlcNAc...) asparagine). 5 disulfides stabilise this stretch: C159-C201, C193-C234, C292-C343, C376-C388, and C382-C403. Residue C162 is part of the active site. Active-site residues include H298 and N318. A propeptide spans 354–463 (KKGQNPPNPG…FWAKSRKHIA (110 aa)) (removed in mature form). N415 carries an N-linked (GlcNAc...) asparagine glycan.

This sequence belongs to the peptidase C1 family. Interacts with PRN2. Interacts with WSCP.

Its function is as follows. Probable thiol protease. The protein is Probable cysteine protease RD21B of Arabidopsis thaliana (Mouse-ear cress).